The primary structure comprises 150 residues: 1,4-dihydroxy-2-naphthoyl-CoA hydrolase (150 aa).

Asp-19 is an active-site residue.

The protein belongs to the 4-hydroxybenzoyl-CoA thioesterase family. DHNA-CoA hydrolase subfamily.

It carries out the reaction 1,4-dihydroxy-2-naphthoyl-CoA + H2O = 1,4-dihydroxy-2-naphthoate + CoA + H(+). It participates in cofactor biosynthesis; phylloquinone biosynthesis. It functions in the pathway quinol/quinone metabolism; 1,4-dihydroxy-2-naphthoate biosynthesis; 1,4-dihydroxy-2-naphthoate from chorismate: step 7/7. Functionally, catalyzes the hydrolysis of 1,4-dihydroxy-2-naphthoyl-CoA (DHNA-CoA) to 1,4-dihydroxy-2-naphthoate (DHNA), a reaction involved in phylloquinone (vitamin K1) biosynthesis. The sequence is that of 1,4-dihydroxy-2-naphthoyl-CoA hydrolase from Prochlorococcus marinus (strain AS9601).